The sequence spans 180 residues: UPF0227 protein Ent638_1623 (180 aa).

This sequence belongs to the UPF0227 family.

This is UPF0227 protein Ent638_1623 from Enterobacter sp. (strain 638).